A 339-amino-acid chain; its full sequence is NmrA-like family domain-containing oxidoreductase cpsB (339 aa).

K142 lines the NADP(+) pocket.

This sequence belongs to the NmrA-type oxidoreductase family.

The enzyme catalyses didehydrocampesine A + 2 AH2 = campesine A + 2 A. Its pathway is alkaloid biosynthesis. In terms of biological role, oxidoreductase; part of the gene cluster that mediates the biosynthesis of campesine G, a dimeric indole piperazine alkaloid that shows good insecticidal activity Galleria mellonella. Within the pathway, cpsB reduces the unstable (S,S)-trypyl-valyl dihydropiperazine (didehydrocampesine A) intermediate to (S, S)-trypyl-valyl-piperazine (campesine A) using two equivalents of NAD(P)H. The non-canonical non-ribosomal peptide synthetase cpsA catalyzes the first steps of the pathway by producing L-tryptophanal and L-valinal from their respective amino-acids. These products condensate spontaneously to form trypyl-valyl pyrazine also known as didehydrocampesine A. The NmrA-like family domain-containing oxidoreductase cpsB is the next enzyme in cps pathway and reduces the unstable didehydrocampesine A to campesine A. The methyltransferase cpsF and the acetyltransferase cpsE both recognize N13 of piperazine ring to carry out methylation and acetylation of campesine A to produce campesine C and B, respectively. The cytochrome P450 monooxygenase cpsD then acts as a dimerase that catalyzes oxidative heterocoupling between campesine B and C to produce heterodimers with unexpected 6/5/6/6/6/6/5/6 eight-ring scaffold called campesine D. Finally,the cytochrome P450 monooxygenase cpsC is a regioselective dehydrogenase that catalyzes dehydrogenation reaction towards C2-N1 to produce campesine G. The protein is NmrA-like family domain-containing oxidoreductase cpsB of Aspergillus campestris (strain IBT 28561).